A 259-amino-acid chain; its full sequence is Envelope biogenesis factor ElyC (259 aa).

Helical transmembrane passes span 12 to 32 (MLLP…LLWF) and 39 to 59 (GKIF…QPVA).

Its subcellular location is the cell inner membrane. Functionally, plays a critical role in the metabolism of the essential lipid carrier used for cell wall synthesis. The chain is Envelope biogenesis factor ElyC (elyC) from Escherichia coli O157:H7.